Here is a 237-residue protein sequence, read N- to C-terminus: MKTAYLASLVLIVSTAYVIRLIAILPFFHTQAGTEKDTKDGVNLLKIRKSSKKPLKIFVFLGSGGHTGEMIRLLENYQDLLLGKSIVYLGYSDEASRQRFAHFIKKFGHCKVKYYEFMKAREVKATLLQSVKTIIGTLVQSFVHVVRIRFAMCGSPHLFLLNGPGTCCIISFWLKIMELLLPLLGSSHIVYVESLARINTPSLTGKILYWVVDEFIVQWQELRDNYLPRSKWFGILV.

At 1–7 (MKTAYLA) the chain is on the lumenal side. A helical transmembrane segment spans residues 8–28 (SLVLIVSTAYVIRLIAILPFF). At 29–237 (HTQAGTEKDT…PRSKWFGILV (209 aa)) the chain is on the cytoplasmic side.

The protein belongs to the ALG14 family. As to quaternary structure, heterodimer with ALG13 to form a functional enzyme.

Its subcellular location is the endoplasmic reticulum membrane. It is found in the nucleus membrane. In terms of biological role, involved in protein N-glycosylation. Essential for the second step of the dolichol-linked oligosaccharide pathway. Anchors the catalytic subunit ALG13 to the ER. The chain is UDP-N-acetylglucosamine transferase subunit ALG14 (ALG14) from Saccharomyces cerevisiae (strain ATCC 204508 / S288c) (Baker's yeast).